Here is a 104-residue protein sequence, read N- to C-terminus: Guanidinium exporter (104 aa).

Position 1 (M1) is a topological domain, cytoplasmic. Residues 2-19 (AWIILVIAGLLEVIWAIG) traverse the membrane as a helical segment. The Periplasmic segment spans residues 20–28 (LKYSHGFSR). A helical membrane pass occupies residues 29-48 (LTPSIITLVAMAASVFLLAY). Residues 49-54 (AMKSLP) lie on the Cytoplasmic side of the membrane. A helical transmembrane segment spans residues 55 to 77 (AGTAYAVWTGIGAVGTAILGIVL). Topologically, residues 78–81 (LGES) are periplasmic. Residues 82 to 100 (ASLARILSLGLILAGIIGL) form a helical membrane-spanning segment. The Cytoplasmic segment spans residues 101–104 (KLAS).

Belongs to the drug/metabolite transporter (DMT) superfamily. Small multidrug resistance (SMR) (TC 2.A.7.1) family. Gdx/SugE subfamily.

Its subcellular location is the cell inner membrane. Its function is as follows. Guanidinium ion exporter. Couples guanidinium export to the proton motive force, exchanging one guanidinium ion for two protons. This chain is Guanidinium exporter, found in Yersinia pestis.